Consider the following 315-residue polypeptide: Ribosomal RNA small subunit methyltransferase H (315 aa).

Residues Gly-37–His-39, Asp-57, Asp-105, and Gln-112 each bind S-adenosyl-L-methionine.

Belongs to the methyltransferase superfamily. RsmH family.

The protein localises to the cytoplasm. It catalyses the reaction cytidine(1402) in 16S rRNA + S-adenosyl-L-methionine = N(4)-methylcytidine(1402) in 16S rRNA + S-adenosyl-L-homocysteine + H(+). Its function is as follows. Specifically methylates the N4 position of cytidine in position 1402 (C1402) of 16S rRNA. This Nitrosococcus oceani (strain ATCC 19707 / BCRC 17464 / JCM 30415 / NCIMB 11848 / C-107) protein is Ribosomal RNA small subunit methyltransferase H.